The primary structure comprises 376 residues: Glucose-1-phosphate adenylyltransferase (376 aa).

Residues Y101, G166, 181–182, and S192 each bind alpha-D-glucose 1-phosphate; that span reads EK.

It belongs to the bacterial/plant glucose-1-phosphate adenylyltransferase family. As to quaternary structure, homotetramer.

The catalysed reaction is alpha-D-glucose 1-phosphate + ATP + H(+) = ADP-alpha-D-glucose + diphosphate. It functions in the pathway glycan biosynthesis; glycogen biosynthesis. Its function is as follows. Involved in the biosynthesis of ADP-glucose, a building block required for the elongation reactions to produce glycogen. Catalyzes the reaction between ATP and alpha-D-glucose 1-phosphate (G1P) to produce pyrophosphate and ADP-Glc. This is Glucose-1-phosphate adenylyltransferase from Bacillus thuringiensis (strain Al Hakam).